A 910-amino-acid chain; its full sequence is Importin subunit beta-2 (910 aa).

HEAT repeat units follow at residues Val-12 to Glu-39, Ile-44 to Leu-82, Tyr-93 to Ile-126, Val-132 to Asp-169, Asp-177 to Leu-207, Phe-220 to Leu-247, Gly-259 to Ala-286, Asp-302 to Phe-406, Ile-414 to Ala-442, Pro-454 to Arg-481, Phe-499 to Ala-532, Leu-540 to Val-573, Arg-581 to Arg-619, Ala-627 to Ser-677, Leu-690 to Phe-721, Asp-729 to Gly-764, Lys-772 to Pro-807, Glu-815 to Asn-848, and Pro-857 to Phe-888. Residues Ala-34–Ser-122 form the Importin N-terminal domain. The disordered stretch occupies residues Asp-333–Asp-381. Polar residues predominate over residues Ile-349–Asn-364. Residues Asp-366–Asp-381 are compositionally biased toward acidic residues.

This sequence belongs to the importin beta family. Importin beta-2 subfamily. Interacts with Ran; interacts specifically with the GTP-bound form of Ran (GTP-Ran), protecting it from GTP hydrolysis and nucleotide exchange. Interacts with nucleoporins.

It is found in the cytoplasm. It localises to the nucleus envelope. Functionally, functions in nuclear protein import as nuclear transport receptor. Serves as receptor for arginine/glycine-rich nuclear localization signals (rg-NLS) and PY-NLS in cargo substrates. Its predominant cargo substrate seems to be mRNA-binding proteins. Mediates docking of the importin/substrate complex to the nuclear pore complex (NPC) through binding to repeat-containing nucleoporins. The complex is subsequently translocated through the pore by an energy requiring, Ran-dependent mechanism. At the nucleoplasmic side of the NPC, GTP-Ran binding leads to release of the cargo. The importin is re-exported from the nucleus to the cytoplasm where GTP hydrolysis releases Ran from importin. The directionality of nuclear import is thought to be conferred by an asymmetric distribution of the GTP- and GDP-bound forms of Ran between the cytoplasm and nucleus. The protein is Importin subunit beta-2 of Schizosaccharomyces pombe (strain 972 / ATCC 24843) (Fission yeast).